Reading from the N-terminus, the 525-residue chain is DNA damage-binding protein CMR1 (525 aa).

Disordered stretches follow at residues 38–86 and 212–233; these read AGIF…AESE and GILDASQQPDQNESDEEDEYPD. Over residues 53–62 the composition is skewed to basic residues; it reads TKKKPAPKRV. WD repeat units lie at residues 183–224, 241–281, 288–328, 339–379, 384–425, 448–491, and 494–525; these read ITRE…DQNE, PHTN…ATEA, SDDE…KANP, LSEK…TKHP, EHES…KDWK, GKWV…LAQL, and DVITAVPAVAVFHRTQNWVVGGTGSAKVCLWM. The segment covering 223–232 has biased composition (acidic residues); the sequence is NESDEEDEYP.

Belongs to the WD repeat DDB2/WDR76 family.

DNA-binding protein that binds to both single- and double-stranded DNA. Binds preferentially to UV-damaged DNA. May be involved in DNA-metabolic processes. The sequence is that of DNA damage-binding protein CMR1 from Coccidioides immitis (strain RS) (Valley fever fungus).